A 257-amino-acid polypeptide reads, in one-letter code: Type III pantothenate kinase (257 aa).

Residue 6-13 coordinates ATP; that stretch reads DCGNTNTV. Residue 107 to 110 participates in substrate binding; the sequence is GPDR. Asp-109 serves as the catalytic Proton acceptor. Asp-129 contributes to the K(+) binding site. Thr-132 lines the ATP pocket. A substrate-binding site is contributed by Thr-184.

The protein belongs to the type III pantothenate kinase family. Homodimer. Requires NH4(+) as cofactor. It depends on K(+) as a cofactor.

Its subcellular location is the cytoplasm. It carries out the reaction (R)-pantothenate + ATP = (R)-4'-phosphopantothenate + ADP + H(+). Its pathway is cofactor biosynthesis; coenzyme A biosynthesis; CoA from (R)-pantothenate: step 1/5. Its function is as follows. Catalyzes the phosphorylation of pantothenate (Pan), the first step in CoA biosynthesis. The sequence is that of Type III pantothenate kinase from Roseobacter denitrificans (strain ATCC 33942 / OCh 114) (Erythrobacter sp. (strain OCh 114)).